The following is a 214-amino-acid chain: Small ribosomal subunit protein eS6 (214 aa).

This sequence belongs to the eukaryotic ribosomal protein eS6 family.

The polypeptide is Small ribosomal subunit protein eS6 (rps6e) (Saccharolobus islandicus (strain Y.G.57.14 / Yellowstone #1) (Sulfolobus islandicus)).